The following is a 459-amino-acid chain: Fe(3+)-Zn(2+) purple acid phosphatase (459 aa).

The N-terminal stretch at M1 to G22 is a signal peptide. Blocked amino end (Gly) is present on G23. N108 is a glycosylation site (N-linked (GlcNAc...) asparagine; partial). A glycan (N-linked (GlcNAc...) asparagine) is linked at N136. D162 contributes to the Fe cation binding site. N170 carries an N-linked (GlcNAc...) asparagine glycan. 2 residues coordinate Fe cation: D191 and Y194. D191 lines the Zn(2+) pocket. N228 contributes to the Zn(2+) binding site. N238 is a glycosylation site (N-linked (GlcNAc...) asparagine). Residue H313 participates in Zn(2+) binding. The Proton donor role is filled by H323. Residue H350 coordinates Zn(2+). A Fe cation-binding site is contributed by H352. N-linked (GlcNAc...) asparagine glycosylation occurs at N423.

It belongs to the metallophosphoesterase superfamily. Purple acid phosphatase family. In terms of assembly, homodimer; disulfide-linked. Fe cation is required as a cofactor. Requires Zn(2+) as cofactor.

The protein localises to the secreted. The catalysed reaction is a phosphate monoester + H2O = an alcohol + phosphate. Inhibited by compounds CC24201, CC27209, and MO07123. Inhibited by the tetraoxoanions molybdate and phosphate. Not inhibited by EDTA or tartrate. This is Fe(3+)-Zn(2+) purple acid phosphatase from Phaseolus vulgaris (Kidney bean).